A 281-amino-acid polypeptide reads, in one-letter code: MAVNVYSTSVTSENLSRHDMLAWVNDSLHLNYTKIEQLCSGAAYCQFMDMLFPGCVHLRKVKFQAKLEHEYIHNFKVLQAAFKKMGVDKIIPVEKLVKGKFQDNFEFIQWFKKFFDANYDGKDYNPLLARQGQDVAPPPNPGDQIFNKSKKLIGTAVPQRTSPTGPKNMQTSGRLSNVAPPCILRKNPPSARNGGHEADAQILELNQQLLDLKLTVDGLEKERDFYFSKLRDIELICQEHESENSPVISGIIGILYATEEGFAPPEDDEIEEHQQEDQDEY.

One can recognise a Calponin-homology (CH) domain in the interval 14 to 116; it reads NLSRHDMLAW…FIQWFKKFFD (103 aa). Disordered regions lie at residues 157–181 and 260–281; these read VPQRTSPTGPKNMQTSGRLSNVAPP and EGFAPPEDDEIEEHQQEDQDEY. Residues 158-175 are compositionally biased toward polar residues; it reads PQRTSPTGPKNMQTSGRL. Phosphoserine occurs at positions 162 and 176. In terms of domain architecture, EB1 C-terminal spans 194–264; it reads GGHEADAQIL…LYATEEGFAP (71 aa). Residues 217-260 are APC-binding; the sequence is DGLEKERDFYFSKLRDIELICQEHESENSPVISGIIGILYATEE. A DCTN1-binding region spans residues 217–281; the sequence is DGLEKERDFY…EHQQEDQDEY (65 aa). A compositionally biased stretch (basic and acidic residues) spans 272–281; that stretch reads EHQQEDQDEY.

It belongs to the MAPRE family. Homodimer. Heterodimer with MAPRE1. Binds monomeric and polymerized GTP-bound tubulin. Interacts with DCTN1 and SRCIN1. Binds to the C-terminal domain of APC. Interacts (via C-terminus) with CLIP1. Interacts with SLAIN2. Interacts with SLAIN1. Interacts with APC2. Interacts with AKAP9. Interacts with PDE4DIP isoform 2/MMG8/SMYLE; this interaction is required for its recruitment to the Golgi apparatus.

The protein localises to the cytoplasm. It localises to the cytoskeleton. Its function is as follows. Plus-end tracking protein (+TIP) that binds to the plus-end of microtubules and regulates the dynamics of the microtubule cytoskeleton. Promotes microtubule growth. May be involved in spindle function by stabilizing microtubules and anchoring them at centrosomes. Also acts as a regulator of minus-end microtubule organization: interacts with the complex formed by AKAP9 and PDE4DIP, leading to recruit CAMSAP2 to the Golgi apparatus, thereby tethering non-centrosomal minus-end microtubules to the Golgi, an important step for polarized cell movement. Promotes elongation of CAMSAP2-decorated microtubule stretches on the minus-end of microtubules. This Mus musculus (Mouse) protein is Microtubule-associated protein RP/EB family member 3 (Mapre3).